The chain runs to 720 residues: Collectin-12 (720 aa).

Residues 1–37 are Cytoplasmic-facing; it reads MKDDFNDEEEVQSFGYKRFGIQEGNECTKCKNDWALR. Residues 38-58 form a helical; Signal-anchor for type II membrane protein membrane-spanning segment; the sequence is VAIALLYVLCALLTIAVAVLG. The Extracellular portion of the chain corresponds to 59–720; that stretch reads YKVVQRMDNV…RTNESKVPVL (662 aa). Coiled-coil stretches lie at residues 95–120, 216–267, and 377–408; these read EKSENATSELHSFKLEFQTLQKQLSD, ISSL…LAAN, and LHGLNNSVAETRAESTELKAQQEELAVRLDKE. Residues 433-576 are disordered; that stretch reads FTILQGPPGP…GPPGLPGLPA (144 aa). 2 consecutive Collagen-like domains span residues 444–503 and 510–569; these read GPRG…PGPK and GRQG…PGPP. Residues 460 to 479 show a composition bias toward basic and acidic residues; it reads PKGEKGEKGAPGDAGPKGEK. The segment covering 488-503 has biased composition (low complexity); the sequence is PGLKGPPGSRGSPGPK. Residues 504 to 513 are compositionally biased toward gly residues; that stretch reads GSRGSGGRQG. Low complexity predominate over residues 527–560; that stretch reads PGRDGQPGPTGPQGPQGLRGPAGPAGLEGARGPV. The span at 562-576 shows a compositional bias: pro residues; that stretch reads PIGPPGPPGLPGLPA. Intrachain disulfides connect Cys-604-Cys-615, Cys-634-Cys-709, and Cys-687-Cys-701. One can recognise a C-type lectin domain in the interval 611 to 710; the sequence is FREQCYHFSA…CTERIGFICE (100 aa). Residues Ile-643, Asn-645, and Glu-649 each contribute to the Ca(2+) site. The a carbohydrate site is built by Lys-670, Gln-673, and Asp-675. 8 residues coordinate Ca(2+): Gln-673, Asp-675, Asn-676, Glu-685, Asp-686, Asn-697, Asp-698, and Glu-710. Glu-685 is an a carbohydrate binding site. Residues Asn-697 and Asp-698 each coordinate a carbohydrate.

Its subcellular location is the membrane. In terms of biological role, scavenger receptor that displays several functions associated with host defense. Binds to carbohydrates. The chain is Collectin-12 (colec12) from Danio rerio (Zebrafish).